The sequence spans 259 residues: F-box/kelch-repeat protein At2g22050 (259 aa).

A compositionally biased stretch (basic residues) spans 1 to 12 (MSPSSKKFKKQS). The segment at 1 to 29 (MSPSSKKFKKQSSSKSVKPPLEDNDPSLP) is disordered. The F-box domain maps to 28–76 (LPSFTSLPDEIVLDCLQRVPRSYYLNLCRVSKTLRSLVRSPELSRLRTL). One copy of the Kelch repeat lies at 142-186 (EIYFVGGSFEPMSELWILDTRTGMFRQGPSMKVARTDEASVGVIN).

The protein is F-box/kelch-repeat protein At2g22050 of Arabidopsis thaliana (Mouse-ear cress).